Here is a 446-residue protein sequence, read N- to C-terminus: Keratin, type I cytoskeletal 25 (446 aa).

Positions 1 to 20 (MSLRLSSGSKRSYARPSTGS) are disordered. Residues 1–74 (MSLRLSSGSK…VNEGGLLSGN (74 aa)) are head. The coil 1A stretch occupies residues 75–110 (EKVTMQNLNDRLASYLDNVQALQEANADLEQKIKGW). Residues 75-390 (EKVTMQNLND…LLIGGDEGAC (316 aa)) enclose the IF rod domain. The segment at 111–132 (YEKFGPGSCRGLDHDYSRYFPI) is linker 1. Positions 133 to 224 (IDDLKNQIIT…KNHKEEMQAL (92 aa)) are coil 1B. Positions 225 to 247 (QCAAGGNVNVEMNAAPGVDLTVL) are linker 12. Positions 248 to 386 (LNNMRAEYEA…ETYCLLIGGD (139 aa)) are coil 2. Positions 387–446 (EGACKSSSYKSKDYTSGNAGNQSKDSPKAIVVKKVLEEVDQRSKILTTRLHSLEEKSQSN) are tail. Residues 394 to 413 (SYKSKDYTSGNAGNQSKDSP) form a disordered region. A compositionally biased stretch (polar residues) spans 400-410 (YTSGNAGNQSK). Residue Ser438 is modified to Phosphoserine.

This sequence belongs to the intermediate filament family. In terms of assembly, heterodimer of a type I and a type II keratin. Heterodimer with type II keratin KRT5 leading to the formation of keratin intermediate filament (KIF) network. Interacts with KRT6A to form filaments.

The protein resides in the cytoplasm. Its function is as follows. Essential for the proper assembly of type I and type II keratin protein complexes and formation of keratin intermediate filaments in the inner root sheath (irs). Plays a role in the cytoskeleton organization. This is Keratin, type I cytoskeletal 25 from Rattus norvegicus (Rat).